A 440-amino-acid chain; its full sequence is T-box transcription factor TBX20 (440 aa).

Positions 103–282 form a DNA-binding region, T-box; that stretch reads LWDKFHDLGT…SNPFAKGFRD (180 aa).

The protein localises to the nucleus. Its function is as follows. Transcriptional regulator that may be involved in heart developmental processes. The sequence is that of T-box transcription factor TBX20 (tbx20) from Xenopus tropicalis (Western clawed frog).